We begin with the raw amino-acid sequence, 98 residues long: DNA-directed RNA polymerase subunit omega (98 aa).

It belongs to the RNA polymerase subunit omega family. As to quaternary structure, the RNAP catalytic core consists of 2 alpha, 1 beta, 1 beta' and 1 omega subunit. When a sigma factor is associated with the core the holoenzyme is formed, which can initiate transcription.

The enzyme catalyses RNA(n) + a ribonucleoside 5'-triphosphate = RNA(n+1) + diphosphate. Its function is as follows. Promotes RNA polymerase assembly. Latches the N- and C-terminal regions of the beta' subunit thereby facilitating its interaction with the beta and alpha subunits. This chain is DNA-directed RNA polymerase subunit omega, found in Xylella fastidiosa (strain M12).